Reading from the N-terminus, the 137-residue chain is Small ribosomal subunit protein uS9c (137 aa).

Belongs to the universal ribosomal protein uS9 family.

It is found in the plastid. The protein localises to the chloroplast. The sequence is that of Small ribosomal subunit protein uS9c (rps9) from Mesostigma viride (Green alga).